The chain runs to 320 residues: GPI-specific phospholipase A2-like PGAP3 (320 aa).

A signal peptide spans M1–G23. Over D24–R98 the chain is Lumenal. N-linked (GlcNAc...) asparagine glycosylation occurs at N40. The chain crosses the membrane as a helical span at residues F99–L119. At V120 to M135 the chain is on the cytoplasmic side. Residues Y136 to F156 form a helical membrane-spanning segment. The Lumenal portion of the chain corresponds to H157–Y169. Residues F170–L190 traverse the membrane as a helical segment. At Q191–A198 the chain is on the cytoplasmic side. The helical transmembrane segment at F199–F219 threads the bilayer. At D220 to Y223 the chain is on the lumenal side. A helical transmembrane segment spans residues N224–L244. Topologically, residues R245–M257 are cytoplasmic. Residues V258–F278 form a helical membrane-spanning segment. W279 is a topological domain (lumenal). The helical transmembrane segment at V280–F299 threads the bilayer. At R300 to D320 the chain is on the cytoplasmic side.

The protein belongs to the PGAP3 family.

The protein resides in the golgi apparatus membrane. In terms of biological role, involved in the fatty acid remodeling steps of GPI-anchor maturation where the unsaturated acyl chain at sn-2 of inositol phosphate is replaced by a saturated stearoyl chain. May catalyze the first step of the fatty acid remodeling, by removing the unsaturated acyl chain at sn-2 of inositol phosphate, generating a lyso-GPI intermediate. The fatty acid remodeling steps is critical for the integration of GPI-APs into lipid rafts. The polypeptide is GPI-specific phospholipase A2-like PGAP3 (Mus musculus (Mouse)).